The sequence spans 95 residues: CRISPR-associated endoribonuclease Cas2 1 (95 aa).

Asp-8 serves as a coordination point for Mg(2+).

Belongs to the CRISPR-associated endoribonuclease Cas2 protein family. As to quaternary structure, homodimer, forms a heterotetramer with a Cas1 homodimer. Mg(2+) is required as a cofactor.

Its function is as follows. CRISPR (clustered regularly interspaced short palindromic repeat), is an adaptive immune system that provides protection against mobile genetic elements (viruses, transposable elements and conjugative plasmids). CRISPR clusters contain sequences complementary to antecedent mobile elements and target invading nucleic acids. CRISPR clusters are transcribed and processed into CRISPR RNA (crRNA). Functions as a ssRNA-specific endoribonuclease. Involved in the integration of spacer DNA into the CRISPR cassette. This Pyrobaculum aerophilum (strain ATCC 51768 / DSM 7523 / JCM 9630 / CIP 104966 / NBRC 100827 / IM2) protein is CRISPR-associated endoribonuclease Cas2 1.